The following is a 372-amino-acid chain: Pluviatolide O-methyltransferase (372 aa).

Positions 214, 237, 257, 258, and 271 each coordinate S-adenosyl-L-homocysteine. The active-site Proton acceptor is the H275. Residues D306 and E338 contribute to the active site.

Belongs to the class I-like SAM-binding methyltransferase superfamily. Cation-independent O-methyltransferase family. COMT subfamily. In terms of assembly, homodimer. Mostly expressed in stems, and, to a lower extent, in leaves.

It carries out the reaction (-)-pluviatolide + S-adenosyl-L-methionine = (-)-bursehernin + S-adenosyl-L-homocysteine + H(+). It participates in aromatic compound metabolism; phenylpropanoid biosynthesis. In terms of biological role, O-methyltransferase involved in the biosynthesis of etoposide, a chemotherapeutic compound of the topoisomerase inhibitor family. Catalyzes the methylation of (-)-pluviatolide to produce (-)-bursehernin. The protein is Pluviatolide O-methyltransferase of Sinopodophyllum hexandrum (Himalayan may apple).